The following is a 375-amino-acid chain: Zinc finger CCCH domain-containing protein 57 (375 aa).

C3H1-type zinc fingers lie at residues 42–70 (RHGEPDCAYYIRTGLCRFGSTCRFNHPHD), 87–115 (RIGQPECEFYLKTGTCKFGVTCKFHHPRN), 133–161 (RPNEDDCSYFLRIGQCKFGGTCKFNHPQT), 243–271 (RPGQPECQFYMKTGDCKFGTVCKFHHPRD), and 289–317 (RPGEPLCVFYSRYGICKFGPSCKFDHPMR). The interval 352–375 (SVEAKPTSLPETTSAKDTIVDAQH) is disordered.

It localises to the nucleus. The sequence is that of Zinc finger CCCH domain-containing protein 57 (ZFN3) from Arabidopsis thaliana (Mouse-ear cress).